Consider the following 103-residue polypeptide: MYAVIAAGGKQHRVEEGEVLRLEKIEVATGETVDFDQVLLVGSGADVKIGTPVVEGAKVTAEVVSHGRADKVTIIKFKRRKHHMKRQGHRQWYTEVKITGIQG.

The protein belongs to the bacterial ribosomal protein bL21 family. Part of the 50S ribosomal subunit. Contacts protein L20.

This protein binds to 23S rRNA in the presence of protein L20. In Teredinibacter turnerae (strain ATCC 39867 / T7901), this protein is Large ribosomal subunit protein bL21.